Consider the following 344-residue polypeptide: Phenylalanine--tRNA ligase alpha subunit (344 aa).

Glu-256 is a binding site for Mg(2+).

The protein belongs to the class-II aminoacyl-tRNA synthetase family. Phe-tRNA synthetase alpha subunit type 1 subfamily. Tetramer of two alpha and two beta subunits. Requires Mg(2+) as cofactor.

It localises to the cytoplasm. It carries out the reaction tRNA(Phe) + L-phenylalanine + ATP = L-phenylalanyl-tRNA(Phe) + AMP + diphosphate + H(+). The sequence is that of Phenylalanine--tRNA ligase alpha subunit from Anoxybacillus flavithermus (strain DSM 21510 / WK1).